A 173-amino-acid chain; its full sequence is Mesencephalic astrocyte-derived neurotrophic factor homolog (173 aa).

The signal sequence occupies residues 1-22 (MNTSHIVLMICFIVGVGQTALA). 4 cysteine pairs are disulfide-bonded: Cys28/Cys114, Cys31/Cys103, Cys61/Cys72, and Cys148/Cys151.

The protein belongs to the ARMET family.

It is found in the secreted. In terms of biological role, required during the maturation of the embryonic nervous system for maintenance of neuronal and cuticular connectivity. Essential for maintenance of dopaminergic neurons and dopamine levels. The chain is Mesencephalic astrocyte-derived neurotrophic factor homolog from Drosophila virilis (Fruit fly).